A 393-amino-acid polypeptide reads, in one-letter code: Beta-1,4-galactosyltransferase 3 (393 aa).

Residues 1-10 (MLRRLLERPC) are Cytoplasmic-facing. The helical; Signal-anchor for type II membrane protein transmembrane segment at 11–31 (TLALLVGSQLAVMMYLSLGGF) threads the bilayer. Residues 32-393 (RSLSALFGRD…ANHTALRGSH (362 aa)) lie on the Lumenal side of the membrane. Residue Asn-57 is glycosylated (N-linked (GlcNAc...) asparagine). Cys-77 and Cys-119 are joined by a disulfide. A UDP-alpha-D-galactose-binding site is contributed by 130–134 (PHRAR). A glycan (N-linked (GlcNAc...) asparagine) is linked at Asn-166. Residues 169–171 (FNR), 196–197 (VD), Tyr-226, and Trp-258 contribute to the UDP-alpha-D-galactose site. Residues Cys-190 and Cys-209 are joined by a disulfide bond. Asp-197 contacts Mn(2+). 260–263 (GEDD) is an N-acetyl-D-glucosamine binding site. Residue His-291 participates in Mn(2+) binding. 291–293 (HRG) is a binding site for UDP-alpha-D-galactose. Position 303 (Arg-303) interacts with N-acetyl-D-glucosamine. N-linked (GlcNAc...) asparagine glycans are attached at residues Asn-337 and Asn-385. The disordered stretch occupies residues 339–393 (TADIGTDPRGPRAPSGPRYPPGSSQAFRQEMLQRRPPARPGPLSTANHTALRGSH).

Belongs to the glycosyltransferase 7 family. It depends on Mn(2+) as a cofactor. In terms of tissue distribution, found in various tissues. Highest expression in placenta, prostate, testis, ovary, intestine and muscle, and in fetal brain.

Its subcellular location is the golgi apparatus. It localises to the golgi stack membrane. It carries out the reaction an N-acetyl-beta-D-glucosaminyl derivative + UDP-alpha-D-galactose = a beta-D-galactosyl-(1-&gt;4)-N-acetyl-beta-D-glucosaminyl derivative + UDP + H(+). It catalyses the reaction N-acetyl-D-glucosamine + UDP-alpha-D-galactose = beta-D-galactosyl-(1-&gt;4)-N-acetyl-D-glucosamine + UDP + H(+). The catalysed reaction is a beta-D-GlcNAc-(1-&gt;3)-beta-D-Gal-(1-&gt;4)-beta-D-Glc-(1&lt;-&gt;1)-Cer(d18:1(4E)) + UDP-alpha-D-galactose = a neolactoside nLc4Cer(d18:1(4E)) + UDP + H(+). The enzyme catalyses a beta-D-glucosylceramide + UDP-alpha-D-galactose = a beta-D-galactosyl-(1-&gt;4)-beta-D-glucosyl-(1&lt;-&gt;1)-ceramide + UDP + H(+). It carries out the reaction a neolactoside IV(3)-beta-GlcNAc-nLc4Cer + UDP-alpha-D-galactose = a neolactoside nLc6Cer + UDP + H(+). The protein operates within protein modification; protein glycosylation. Functionally, responsible for the synthesis of complex-type N-linked oligosaccharides in many glycoproteins as well as the carbohydrate moieties of glycolipids. The sequence is that of Beta-1,4-galactosyltransferase 3 from Homo sapiens (Human).